The chain runs to 227 residues: LysM and putative peptidoglycan-binding domain-containing protein 1 (227 aa).

A phosphoserine mark is found at Ser23 and Ser33. Residues 40 to 84 form the LysM domain; the sequence is LEHQLEPGDTLAGLALKYGVTMEQIKRTNRLYTNDSIFLKKTLYI. The segment at 95–157 is disordered; the sequence is NGLDSEEEEN…PSHDLSASDF (63 aa). A compositionally biased stretch (acidic residues) spans 98–108; it reads DSEEEENDGEE. Ser99 is subject to Phosphoserine. Polar residues predominate over residues 143–152; that stretch reads QGTSTPSHDL. Residues Ser166, Ser181, Ser194, and Ser212 each carry the phosphoserine modification. A disordered region spans residues 169–227; sequence KKAAAQKLRKGESGVPEEDTGLYPSSPRMQQRAVLGPVPLTRTSRTQTLRDQEDEIFKL. Over residues 216-227 the composition is skewed to basic and acidic residues; sequence TLRDQEDEIFKL.

The protein is LysM and putative peptidoglycan-binding domain-containing protein 1 (Lysmd1) of Rattus norvegicus (Rat).